The following is a 447-amino-acid chain: UDP-N-acetylmuramate--L-alanine ligase (447 aa).

Gly-107–Thr-113 contacts ATP.

This sequence belongs to the MurCDEF family.

Its subcellular location is the cytoplasm. The enzyme catalyses UDP-N-acetyl-alpha-D-muramate + L-alanine + ATP = UDP-N-acetyl-alpha-D-muramoyl-L-alanine + ADP + phosphate + H(+). The protein operates within cell wall biogenesis; peptidoglycan biosynthesis. Its function is as follows. Cell wall formation. This Rubrobacter xylanophilus (strain DSM 9941 / JCM 11954 / NBRC 16129 / PRD-1) protein is UDP-N-acetylmuramate--L-alanine ligase.